Consider the following 271-residue polypeptide: Short chain dehydrogenase virK (271 aa).

NADP(+)-binding residues include Leu-13, Asp-59, Asn-87, Tyr-168, Lys-172, Val-201, and Thr-203. The active-site Proton donor is Tyr-168. Lys-172 acts as the Lowers pKa of active site Tyr in catalysis.

It belongs to the short-chain dehydrogenases/reductases (SDR) family.

The protein operates within secondary metabolite biosynthesis. Functionally, short chain dehydrogenase; part of the gene cluster that mediates the biosynthesis of virensols and trichoxide, fungal natural products that contain or are derived from a salicylaldehyde core. The pathway begins with the synthesis of the reduced chain in virensol C by the highly reducing polyketide synthase virA via condensation of one acetate and 8 malonate units. VirA has interesting programming rules since the first 2 ketides are fully reduced, the 3 following ketides undergo beta-dehydration, and the last 3 ketides are only reduced to beta-hydroxys to yield the trihydroxy portion. The production of aldehyde virensol C by virA alone is surprising, since virA does not contain a reductase (R) domain that is typically associated with reductive product release in HRPKS. The cupin-domain enzyme virC is involved in enhancing virA product turnover. The short-chain dehydrogenase virB then oxidizes the C-7 alcohol of virensol C to a ketone, yielding virensol D. Virensol D is further transformed to salicylaldehyde 5-deoxyaurocitrin by the short-chain dehydrogenase virD. VirD catalyzes the dehydrogenation of C-3 to form the beta-ketone aldehyde, which is followed by the generation of the nucleophilic C-2 that is required for the intramolecular aldol condensation between C-2 and C-7, itself followed by dehydration and aromatization which leads to salicylaldehyde 5-deoxyaurocitrin. While the dehydrogenation of virensol D is definitely catalyzed by virD, the aldol condensation and dehydration may be uncatalyzed or assisted by virD. The short chain dehydrogenase virG then converts salicylaldehyde 5-deoxyaurocitrin into virensol B which is further hydroxylated by the cytochrome P450 monooxygenase virE to yield the hydroquinone virensol A. VirI then may oxidize virensol A to form the quinone, while virH performs the epoxidation. Finally, the two remaining short-chain dehydrogenases, virK and virL, are probably responsible for reducing the ketones to the corresponding alcohols to furnish the epoxycyclohexanol structure in trichoxide. The polypeptide is Short chain dehydrogenase virK (Hypocrea virens (strain Gv29-8 / FGSC 10586) (Gliocladium virens)).